Here is a 582-residue protein sequence, read N- to C-terminus: MAAAMPLGLPLRLLVLLLVGRGCCGCAEGPRDSLREELVITPLPSGDVAATFQFRTRWDSDLQREGVSHYRLFPKALGQLISKYSLRELHLSFTQGFWRTRYWGPPFLQAPSGAELWVWFQDTVTDVDKSWRELSNVLSGIFCASLNFIDATNTVTPTASFKPLGLANDTDDYFLRYAVLPREVVCTENLTPWKKLLPCSSKAGLSVLLKADRLFHTSYHSQAVHIRPICRNAHCTSISWELRQTLSVVFDAFITGQGKKDWSLFRMFSRTLTEACPLASQSLVYVDITGYSQDNETLEVSPPPTSTYQDVILGTRKTYAVYDLFDTAMINNSRNLNIQLKWKRPPDNEALPVPFLHAQRYVSGYGLQKGELSTLLYNSHPYRAFPVLLLDVVPWYLRLYVHTLTITSKGKENKPSYIHYQPAQDRQQPHLLEMLIQLPANSVTKVSIQFERALLKWTEYTPDPNHGFYVSPSVLSALVPSVVAAKPVDWEGSPLFNTLFPVSDGSSYFVRLYTEPLLVNLPTPDFSMPYNVICLTCTVVAVCYGSFYNLLTRTFHIEEPKSGGLAKRLANLIRRARGVPPL.

A signal peptide spans 1-25; that stretch reads MAAAMPLGLPLRLLVLLLVGRGCCG. Residues 26–529 are Lumenal-facing; it reads CAEGPRDSLR…NLPTPDFSMP (504 aa). The N-linked (GlcNAc...) asparagine glycan is linked to Asn-168. 2 disulfides stabilise this stretch: Cys-199–Cys-276 and Cys-230–Cys-235. Residues Asn-295 and Asn-331 are each glycosylated (N-linked (GlcNAc...) asparagine). Residues Asn-465, Asp-525, Ser-527, and Asn-531 each contribute to the a 2-acyl-6-[6-phosphoethanolamine-alpha-D-mannosyl-(1-&gt;2)-6-phosphoethanolamine-alpha-D-mannosyl-(1-&gt;6)-2-phosphoethanolamine-alpha-D-mannosyl-(1-&gt;4)-alpha-D-glucosaminyl]-1-(1-radyl,2-acyl-sn-glycero-3-phospho)-1D-myo-inositol site. A helical membrane pass occupies residues 530-552; it reads YNVICLTCTVVAVCYGSFYNLLT. Residues 553–582 are Cytoplasmic-facing; sequence RTFHIEEPKSGGLAKRLANLIRRARGVPPL.

Belongs to the PIGT family. Heteropentamer. Part of the GPI-anchor transamidase complex, consisting of PIGK, PIGT, PIGS, PIGU and GAA1. Post-translationally, the disulfide bond between PIGK/GPI8 and PIGT is important for normal enzyme activity.

The protein localises to the endoplasmic reticulum membrane. Its pathway is glycolipid biosynthesis; glycosylphosphatidylinositol-anchor biosynthesis. Its function is as follows. Component of the glycosylphosphatidylinositol-anchor (GPI-anchor) transamidase (GPI-T) complex that catalyzes the formation of the linkage between a proprotein and a GPI-anchor and participates in GPI anchored protein biosynthesis. May play a crucial role in GPI-T complex assembly in the luminal layer. Binds GPI-anchor. The polypeptide is GPI-anchor transamidase component PIGT (Mus musculus (Mouse)).